The sequence spans 411 residues: D-galactonate dehydratase family member SBI_01856 (411 aa).

2 residues coordinate substrate: N45 and H130. Residue Y167 is the Proton donor/acceptor of the active site. Residue D219 coordinates Mg(2+). The active-site Proton donor/acceptor is H221. Mg(2+) contacts are provided by E245 and E271. Substrate is bound by residues E271, R292, H321, D325, and E348.

This sequence belongs to the mandelate racemase/muconate lactonizing enzyme family. GalD subfamily. The cofactor is Mg(2+).

The enzyme catalyses D-gluconate = 2-dehydro-3-deoxy-D-gluconate + H2O. Has low D-gluconate dehydratase activity (in vitro), suggesting that it has no significant role in D-gluconate degradation in vivo. Has no detectable activity with a panel of 70 other acid sugars (in vitro). This chain is D-galactonate dehydratase family member SBI_01856, found in Streptomyces bingchenggensis (strain BCW-1).